A 313-amino-acid chain; its full sequence is Ornithine carbamoyltransferase (313 aa).

Carbamoyl phosphate-binding positions include 57-60 (STRT), Q84, R108, and 135-138 (HPTQ). L-ornithine contacts are provided by residues N167, D231, and 235–236 (SM). Residues 272 to 273 (CL) and R300 contribute to the carbamoyl phosphate site.

This sequence belongs to the aspartate/ornithine carbamoyltransferase superfamily. OTCase family.

The protein resides in the cytoplasm. It catalyses the reaction carbamoyl phosphate + L-ornithine = L-citrulline + phosphate + H(+). It functions in the pathway amino-acid biosynthesis; L-arginine biosynthesis; L-arginine from L-ornithine and carbamoyl phosphate: step 1/3. Functionally, reversibly catalyzes the transfer of the carbamoyl group from carbamoyl phosphate (CP) to the N(epsilon) atom of ornithine (ORN) to produce L-citrulline. This chain is Ornithine carbamoyltransferase, found in Pseudothermotoga lettingae (strain ATCC BAA-301 / DSM 14385 / NBRC 107922 / TMO) (Thermotoga lettingae).